The sequence spans 246 residues: Phosphomannomutase 2 (246 aa).

Position 2 is an N-acetylalanine (alanine 2). Aspartate 12 serves as the catalytic Nucleophile. 2 residues coordinate Mg(2+): aspartate 12 and aspartate 14. Catalysis depends on aspartate 14, which acts as the Proton donor/acceptor. 6 residues coordinate alpha-D-mannose 1-phosphate: arginine 21, arginine 123, arginine 134, arginine 141, serine 179, and aspartate 181. Aspartate 209, phenylalanine 221, aspartate 223, and threonine 226 together coordinate Mg(2+).

This sequence belongs to the eukaryotic PMM family. Homodimer.

The protein resides in the cytoplasm. The catalysed reaction is alpha-D-mannose 1-phosphate = D-mannose 6-phosphate. The protein operates within nucleotide-sugar biosynthesis; GDP-alpha-D-mannose biosynthesis; alpha-D-mannose 1-phosphate from D-fructose 6-phosphate: step 2/2. In terms of biological role, involved in the synthesis of the GDP-mannose and dolichol-phosphate-mannose required for a number of critical mannosyl transfer reactions. This chain is Phosphomannomutase 2 (PMM2), found in Bos taurus (Bovine).